The following is a 488-amino-acid chain: Probable cytosol aminopeptidase (488 aa).

Lys254 and Asp259 together coordinate Mn(2+). Lys266 is a catalytic residue. 3 residues coordinate Mn(2+): Asp277, Asp336, and Glu338. Arg340 is an active-site residue.

Belongs to the peptidase M17 family. Mn(2+) is required as a cofactor.

It localises to the cytoplasm. The catalysed reaction is Release of an N-terminal amino acid, Xaa-|-Yaa-, in which Xaa is preferably Leu, but may be other amino acids including Pro although not Arg or Lys, and Yaa may be Pro. Amino acid amides and methyl esters are also readily hydrolyzed, but rates on arylamides are exceedingly low.. It catalyses the reaction Release of an N-terminal amino acid, preferentially leucine, but not glutamic or aspartic acids.. In terms of biological role, presumably involved in the processing and regular turnover of intracellular proteins. Catalyzes the removal of unsubstituted N-terminal amino acids from various peptides. In Roseiflexus castenholzii (strain DSM 13941 / HLO8), this protein is Probable cytosol aminopeptidase.